The sequence spans 84 residues: Small ribosomal subunit protein bS16c (84 aa).

The protein belongs to the bacterial ribosomal protein bS16 family.

It localises to the plastid. The protein resides in the chloroplast. The protein is Small ribosomal subunit protein bS16c of Mesostigma viride (Green alga).